Here is a 711-residue protein sequence, read N- to C-terminus: Exotoxin translocation ATP-binding protein PaxB (711 aa).

In terms of domain architecture, Peptidase C39 spans 1–129; it reads MEPLMSFKQK…QVFQGNVILL (129 aa). 5 helical membrane-spanning segments follow: residues 157–177, 195–215, 273–293, 299–319, and 392–412; these read IFVE…ITPL, LNVI…LSGL, ALTS…MWYY, IVIL…SPIL, and VMII…LSIG. Residues 158–440 form the ABC transmembrane type-1 domain; it reads FVEVMIVSIF…LAQLWQDFQQ (283 aa). Positions 472–707 constitute an ABC transporter domain; the sequence is VTFKNIRFRY…KDGLYYYLNQ (236 aa). Residue 506 to 513 coordinates ATP; sequence GRSGSGKS.

Belongs to the ABC transporter superfamily. Protein-1 exporter (TC 3.A.1.109) family. As to quaternary structure, homodimer.

Its subcellular location is the cell inner membrane. It carries out the reaction ATP + H2O + proteinSide 1 = ADP + phosphate + proteinSide 2.. In terms of biological role, part of the ABC transporter complex PaxBD involved in PaxA export. Transmembrane domains (TMD) form a pore in the inner membrane and the ATP-binding domain (NBD) is responsible for energy generation. This Pasteurella aerogenes protein is Exotoxin translocation ATP-binding protein PaxB (paxB).